A 500-amino-acid polypeptide reads, in one-letter code: L-arabinose isomerase (500 aa).

4 residues coordinate Mn(2+): glutamate 306, glutamate 333, histidine 350, and histidine 450.

It belongs to the arabinose isomerase family. Homohexamer. Mn(2+) serves as cofactor.

It carries out the reaction beta-L-arabinopyranose = L-ribulose. Its pathway is carbohydrate degradation; L-arabinose degradation via L-ribulose; D-xylulose 5-phosphate from L-arabinose (bacterial route): step 1/3. In terms of biological role, catalyzes the conversion of L-arabinose to L-ribulose. The sequence is that of L-arabinose isomerase from Shigella flexneri.